The following is a 96-amino-acid chain: uncharacterized protein (96 aa).

Helical transmembrane passes span 3–23 (KLTI…QLFA), 30–50 (TLGN…LASI), and 68–88 (IGLL…IIII).

The protein localises to the cell membrane. This is an uncharacterized protein from Bacillus subtilis (strain 168).